The primary structure comprises 249 residues: NADH-quinone oxidoreductase subunit C (249 aa).

It belongs to the complex I 30 kDa subunit family. In terms of assembly, NDH-1 is composed of 14 different subunits. Subunits NuoB, C, D, E, F, and G constitute the peripheral sector of the complex.

It localises to the cell inner membrane. The catalysed reaction is a quinone + NADH + 5 H(+)(in) = a quinol + NAD(+) + 4 H(+)(out). Its function is as follows. NDH-1 shuttles electrons from NADH, via FMN and iron-sulfur (Fe-S) centers, to quinones in the respiratory chain. The immediate electron acceptor for the enzyme in this species is believed to be ubiquinone. Couples the redox reaction to proton translocation (for every two electrons transferred, four hydrogen ions are translocated across the cytoplasmic membrane), and thus conserves the redox energy in a proton gradient. The protein is NADH-quinone oxidoreductase subunit C of Stenotrophomonas maltophilia (strain R551-3).